Consider the following 742-residue polypeptide: MFSSCWLKSSVRYSRLIRQFSSENSFFKVELVPSDRKTPLQPRKVVAPRFEKKTRQKISDYLKQMATPEIEAKLAPLRAAVKEYGDLIRDLKAKGAPKIDIDKAVVELKARKRLLEDTEIALAPKEASFDRLKLEDLLKRRFFYDQSFAIYGGVTGLYDFGPMGCSLKANMLQEWRKHFILEEGMLEVDCTSLTPEPVLKASGHVDRFADWMVKDMKNGECFRADHLIKNSIEKLLNDKKTSAAVKQDGQDVLARLEGFDNKDMHEVITRFNFKSPITGNDLTEPIAFNLMFPTQIGPTGDFKAFLRPETAQGIFVNFKRLLEFNQGKLPFAAAQIGLGFRNEISPRQGLIRVREFTMCEIEHFVDPEDKSLAKFAKVADQKLVLFSACNQLDGAPAQEVAIGEAVAKKTVANETLGYYMARCHQFLMKVGIDGRRLRFRQHLSNEMAHYAQDCWDAEILTSYGWIECVGNADRACYDLQQHYKATNVKLVAEKKLPEPVDVNFVEAQANMALLGKSFKKDAKKIQTSLQQLTSEQVSALEEELLAKKLYNLSVDGQNYALTPEHLNIKKYTKKIHVQEITPSVIEPSYGIGRIMYALLEHSFRQREGDEQRTFLAFKPLVAPIKCSVLPISANDTLIPVMDAVKEELSRFEMSYKVDDSSGTIGRRYARTDEIGIPFGITVDFDSLKTTPFTVTIRHAETMSQIRLEVSELGRLISDLVAGRQQWSDAQAKYPKFEASATE.

The WHEP-TRS domain occupies 73–129 (KLAPLRAAVKEYGDLIRDLKAKGAPKIDIDKAVVELKARKRLLEDTEIALAPKEASF). A glycine-binding site is contributed by E309. ATP-binding positions include 341 to 343 (RNE) and 352 to 353 (RV). Glycine is bound at residue E360. ATP is bound at residue 467–468 (EC). 586–588 (EPS) is a glycine binding site. R593 provides a ligand contact to ATP.

Belongs to the class-II aminoacyl-tRNA synthetase family. In terms of assembly, homodimer.

The protein localises to the cytoplasm. It localises to the cell projection. Its subcellular location is the axon. The protein resides in the secreted. It is found in the extracellular exosome. The catalysed reaction is tRNA(Gly) + glycine + ATP = glycyl-tRNA(Gly) + AMP + diphosphate. It carries out the reaction 2 ATP + H(+) = P(1),P(4)-bis(5'-adenosyl) tetraphosphate + diphosphate. In terms of biological role, catalyzes the ATP-dependent ligation of glycine to the 3'-end of its cognate tRNA, via the formation of an aminoacyl-adenylate intermediate (Gly-AMP). Also produces diadenosine tetraphosphate (Ap4A), a universal pleiotropic signaling molecule needed for cell regulation pathways, by direct condensation of 2 ATPs. Thereby, may play a special role in Ap4A homeostasis. This chain is Glycine--tRNA ligase, found in Caenorhabditis elegans.